Here is a 134-residue protein sequence, read N- to C-terminus: Large ribosomal subunit protein bL17 (134 aa).

Belongs to the bacterial ribosomal protein bL17 family. As to quaternary structure, part of the 50S ribosomal subunit. Contacts protein L32.

This chain is Large ribosomal subunit protein bL17, found in Colwellia psychrerythraea (strain 34H / ATCC BAA-681) (Vibrio psychroerythus).